An 878-amino-acid chain; its full sequence is MKNLCWVFLSLFWFGVFLIIRFAEGQNQEGFISLDCGLPLNEPPYIESETGIQFSSDENFIQSGKTGRIPKNLESENLKQYATLRYFPDGIRNCYDLRVEEGRNYLIRATFFYGNFDGLNVSPEFDMHIGPNKWTTIDLQIVPDGTVKEIIHIPRSNSLQICLVKTGATIPMISALELRPLANDTYIAKSGSLKYYFRMYLSNATVLLRYPKDVYDRSWVPYIQPEWNQISTTSNVSNKNHYDPPQVALKMAATPTNLDAALTMVWRLENPDDQIYLYMHFSEIQVLKANDTREFDIILNGETINTRGVTPKYLEIMTWLTTNPRQCNGGICRMQLTKTQKSTLPPLLNAFEVYSVLQLPQSQTNEIEVVAIKNIRTTYGLSRISWQGDPCVPKQFLWDGLNCNITDISAPPRIISLNLSSSGLSGTIVSNFQNLAHLESLDLSNNSLSGIVPEFLATMKSLLVINLSGNKLSGAIPQALRDREREGLKLNVLGNKELCLSSTCIDKPKKKVAVKVVAPVASIAAIVVVILLFVFKKKMSSRNKPEPWIKTKKKRFTYSEVMEMTKNLQRPLGEGGFGVVYHGDLNGSEQVAVKLLSQTSAQGYKEFKAEVELLLRVHHINLVNLVGYCDEQDHFALIYEYMSNGDLHQHLSGKHGGSVLNWGTRLQIAIEAALGLEYLHTGCKPAMVHRDVKSTNILLDEEFKAKIADFGLSRSFQVGGDQSQVSTVVAGTLGYLDPEYYLTSELSEKSDVYSFGILLLEIITNQRVIDQTRENPNIAEWVTFVIKKGDTSQIVDPKLHGNYDTHSVWRALEVAMSCANPSSVKRPNMSQVIINLKECLASENTRISRNNQNMDSGHSSDQLNVTVTFDTDVKPKAR.

The signal sequence occupies residues Met-1–Gly-25. Residues Gln-26 to Val-514 are Extracellular-facing. N-linked (GlcNAc...) asparagine glycans are attached at residues Asn-183, Asn-203, Asn-235, Asn-290, Asn-404, Asn-418, Asn-445, and Asn-466. 3 LRR repeats span residues Arg-413 to Ala-436, His-437 to Thr-458, and Ser-461 to Arg-483. A helical membrane pass occupies residues Lys-515–Phe-535. Residues Lys-536 to Arg-878 are Cytoplasmic-facing. Thr-557 carries the post-translational modification Phosphothreonine. One can recognise a Protein kinase domain in the interval Lys-566 to Leu-840. ATP contacts are provided by residues Leu-572–Val-580 and Lys-594. Residue Tyr-639 is modified to Phosphotyrosine. Asp-691 (proton acceptor) is an active-site residue. Ser-726 is subject to Phosphoserine. Phosphothreonine is present on residues Thr-727 and Thr-732. Tyr-740 is modified (phosphotyrosine). The segment covering Arg-849–Phe-869 has biased composition (polar residues). The tract at residues Arg-849–Arg-878 is disordered.

This sequence belongs to the protein kinase superfamily. Ser/Thr protein kinase family.

It localises to the membrane. The enzyme catalyses L-seryl-[protein] + ATP = O-phospho-L-seryl-[protein] + ADP + H(+). It catalyses the reaction L-threonyl-[protein] + ATP = O-phospho-L-threonyl-[protein] + ADP + H(+). Functionally, receptor-like serine/threonine-kinase required during the endosperm development in seeds. The polypeptide is Probable LRR receptor-like serine/threonine-protein kinase MEE39 (MEE39) (Arabidopsis thaliana (Mouse-ear cress)).